The chain runs to 335 residues: Transcription factor bHLH63 (335 aa).

Residues 110–160 (MTMNRDDLVEEGEEEKSKITEQNNGSTKSIKKMKHKAKKEENNFSNDSSKV) form a disordered region. The 51-residue stretch at 178-228 (QATDSHSIAERVRREKISERMKFLQDLVPGCDKITGKAGMLDEIINYVQSL) folds into the bHLH domain.

Homodimer. Interacts with IBH1. Binds reversibly to CRY2 after blue light illumination. In terms of tissue distribution, expressed constitutively in roots, leaves, and stems.

Its subcellular location is the nucleus. In terms of biological role, transcription factor that binds DNA to G box 5'-CACGTG-3' and, to a lower extent, to E-box 5'-CANNTG-3' in vitro. Binds to chromatin DNA of the FT gene and promotes its expression, and thus triggers flowering in response to blue light. This chain is Transcription factor bHLH63 (BHLH63), found in Arabidopsis thaliana (Mouse-ear cress).